We begin with the raw amino-acid sequence, 1195 residues long: MHDINFNILKDRAMDVDPDIRFMALEDLRKFLQDESAASTRTTLNQSLENFFPILLNMLNDQNPDVQTQAIKSFEPMVKYLSNETFSKLVKKLFALVQQNSSSTGNVTGMKSFTVSVPNIALRSLFAQSNSRDKSEFVSDKLSNSNYRFDPHLARYIMDYLIPQIVGNPVTIDSIELLIDLVTEIGYVLTQDELLNLSLYLTKVALTETGLIGKKSMVALERVVALVRTEVVIDKLLAQINQSIEPTKLFVIFQLYSVCLKRGIKPNSIDTIYNTITSNLNIEATEEEDDDDLDFDNLVKENSLKDEALTTLIDLVSQHFLPVESKNTVIALIKSYVNYNPLAQDEDFIDDEEDDISFSDDEQEDDGDGENDGSWKLRAKATILTRALLKSFPDTLELLSKEVLPVFSFADSNDQVVSEVIKSSIAIVNSTSPRDSTNVSELFPIIAARMKLAKETQVPLFLKLVESLNRFDNTSLVLEVFKIIKDRKLITSGSFDYLQFYSSTLKFHDNLPPLVIERMSSDFIKNLDDKSFNMITDSIKCLSLLFHQDSLEKLDAIVDLLIYKVENSKQYPSDLVRQSIIALGEAYGRADKQKILNVFKHSIEYEGTSKTTIDVLTQIYSTDIPSEYSYLILKKLSTSIMSSTEATSVASLLLMNKIFERLPSGDYDDTAGNLVQLLAVTNKANYECIFHILIKLVGTVLQETHRAPLLQTIVKLVNEGKIEVADNSFFQFITTACNQIPDLYNFFEDGLNLNSELSAKILAICASQNKLENKIMERREEFQNYYNSNINDSRLAFDILFLGYVGTHIEVKELDVQTLIGLLSNSQLTNDDNISAASTALGLIAQKHIDSAVPIILNAYESSEKTIIRGSLVDSLSIAADACNEDQKRVIWDKVFNFPVEFDHEVITELKKSGELLGKIPVVDELTINTDNLKTTYLILVITKSLLNNLQATKVNNTLLDSLIKSSIEWLNIVNIDIRQIVVGNLLTGLHSKPDTILPILDSIILPKIFDQLQAEDSFKKIITMGPYKYVLDEGLEIRKLCYEFIYSVISLENAVIKKYNINLEKIASKIIEVGLIDTQTDITVLACINLTNYIELHKDSAVELITRDGGNAFTTMINNLKKQLSKKLSAKASTQDSESHQERIKSIIKLSKKFASVVEAAESIELAAAIRVWNEYNNDLKTNFTIYYNSTDGV.

HEAT repeat units follow at residues 1 to 37 (MHDI…DESA), 45 to 83 (NQSL…YLSN), 168 to 206 (NPVT…KVAL), 397 to 434 (ELLS…TSPR), 436 to 474 (STNV…FDNT), 703 to 742 (ETHR…QIPD), 846 to 885 (QKHI…ACNE), and 999 to 1037 (PILD…EGLE).

It belongs to the CAND family.

In terms of biological role, key assembly factor of SCF (SKP1-CUL1-F-box protein) E3 ubiquitin ligase complexes that promotes the exchange of the substrate-recognition F-box subunit in SCF complexes, thereby playing a key role in the cellular repertoire of SCF complexes. Acts as a F-box protein exchange factor. This chain is Cullin-associated NEDD8-dissociated protein 1 (TIP120), found in Candida albicans (strain SC5314 / ATCC MYA-2876) (Yeast).